Consider the following 235-residue polypeptide: tRNA pseudouridine synthase B (235 aa).

Asp-45 serves as the catalytic Nucleophile.

Belongs to the pseudouridine synthase TruB family. Type 1 subfamily.

The catalysed reaction is uridine(55) in tRNA = pseudouridine(55) in tRNA. Its function is as follows. Responsible for synthesis of pseudouridine from uracil-55 in the psi GC loop of transfer RNAs. The polypeptide is tRNA pseudouridine synthase B (Chlamydia pneumoniae (Chlamydophila pneumoniae)).